The chain runs to 126 residues: Small ribosomal subunit protein uS12 (126 aa).

A 3-methylthioaspartic acid modification is found at aspartate 89. The interval 99-126 is disordered; the sequence is RGSLDTSGVNDRKQGRSKYGTKKPKDKK. The segment covering 113–126 has biased composition (basic residues); the sequence is GRSKYGTKKPKDKK.

The protein belongs to the universal ribosomal protein uS12 family. Part of the 30S ribosomal subunit. Contacts proteins S8 and S17. May interact with IF1 in the 30S initiation complex.

In terms of biological role, with S4 and S5 plays an important role in translational accuracy. Functionally, interacts with and stabilizes bases of the 16S rRNA that are involved in tRNA selection in the A site and with the mRNA backbone. Located at the interface of the 30S and 50S subunits, it traverses the body of the 30S subunit contacting proteins on the other side and probably holding the rRNA structure together. The combined cluster of proteins S8, S12 and S17 appears to hold together the shoulder and platform of the 30S subunit. The polypeptide is Small ribosomal subunit protein uS12 (Legionella pneumophila (strain Paris)).